A 219-amino-acid chain; its full sequence is Germin-like protein subfamily 2 member 1 (219 aa).

A signal peptide spans 1 to 21 (MASPTLTLLLLLTTVSFFISS). A disulfide bridge connects residues Cys32 and Cys47. Residues 61–209 (QGLAKPGLTN…AFQTSPGTVK (149 aa)) form the Cupin type-1 domain. The N-linked (GlcNAc...) asparagine glycan is linked to Asn70. Positions 109, 111, 116, and 155 each coordinate Mn(2+).

It belongs to the germin family. As to quaternary structure, oligomer (believed to be a pentamer but probably hexamer).

Its subcellular location is the secreted. It localises to the extracellular space. The protein localises to the apoplast. Its function is as follows. May play a role in plant defense. Probably has no oxalate oxidase activity even if the active site is conserved. This chain is Germin-like protein subfamily 2 member 1 (GLP4), found in Arabidopsis thaliana (Mouse-ear cress).